The sequence spans 30 residues: Bowman-Birk type proteinase inhibitor 4 (30 aa).

Cystine bridges form between cysteine 9–cysteine 24 and cysteine 14–cysteine 22.

In terms of biological role, inhibits trypsin (IC(50)=17.60 nM) and, to a lesser extent, alpha-chymotrypsin (IC(50)=2.38 uM). The protein is Bowman-Birk type proteinase inhibitor 4 of Lathyrus sativus (White vetchling).